Reading from the N-terminus, the 125-residue chain is MARIAGVDLPRDKRAEIGLTYIYGIGPTRAKEILAKTGVSPDTRIKDLNDSEVAALRQVVENDYQVEGDLRRLEAMSIKRLMDIGTVRGRRHRAGLPVRGQRTRTNARTRRGARKTVAGKKKATR.

Positions 93–125 (RAGLPVRGQRTRTNARTRRGARKTVAGKKKATR) are disordered. Residues 101 to 125 (QRTRTNARTRRGARKTVAGKKKATR) are compositionally biased toward basic residues.

This sequence belongs to the universal ribosomal protein uS13 family. In terms of assembly, part of the 30S ribosomal subunit. Forms a loose heterodimer with protein S19. Forms two bridges to the 50S subunit in the 70S ribosome.

Located at the top of the head of the 30S subunit, it contacts several helices of the 16S rRNA. In the 70S ribosome it contacts the 23S rRNA (bridge B1a) and protein L5 of the 50S subunit (bridge B1b), connecting the 2 subunits; these bridges are implicated in subunit movement. Contacts the tRNAs in the A and P-sites. The chain is Small ribosomal subunit protein uS13 from Synechococcus elongatus (strain ATCC 33912 / PCC 7942 / FACHB-805) (Anacystis nidulans R2).